The sequence spans 446 residues: Histidine--tRNA ligase (446 aa).

This sequence belongs to the class-II aminoacyl-tRNA synthetase family. In terms of assembly, homodimer.

It is found in the cytoplasm. The catalysed reaction is tRNA(His) + L-histidine + ATP = L-histidyl-tRNA(His) + AMP + diphosphate + H(+). The chain is Histidine--tRNA ligase from Burkholderia pseudomallei (strain 668).